The primary structure comprises 359 residues: Protein RecA (359 aa).

Gly74 to Thr81 is a binding site for ATP.

Belongs to the RecA family.

The protein resides in the cytoplasm. Its function is as follows. Can catalyze the hydrolysis of ATP in the presence of single-stranded DNA, the ATP-dependent uptake of single-stranded DNA by duplex DNA, and the ATP-dependent hybridization of homologous single-stranded DNAs. It interacts with LexA causing its activation and leading to its autocatalytic cleavage. The polypeptide is Protein RecA (Anaplasma marginale (strain St. Maries)).